Consider the following 668-residue polypeptide: Ecdysone oxidase (668 aa).

FAD is bound by residues 137–140 (NHMV), Val-270, and 536–537 (WH). The Proton acceptor role is filled by His-537.

This sequence belongs to the GMC oxidoreductase family. The cofactor is FAD.

The enzyme catalyses ecdysone + O2 = 3-dehydroecdysone + H2O2. In terms of biological role, involved in the inactivation of ecdysteroid molting hormones by converting ecdysteroids into 3-dehydroecdysteroids. This is Ecdysone oxidase from Bombyx mori (Silk moth).